A 272-amino-acid chain; its full sequence is HMP-PP phosphatase (272 aa).

Asp8 (nucleophile) is an active-site residue. 3 residues coordinate Mg(2+): Asp8, Asp10, and Asp212.

It belongs to the HAD-like hydrolase superfamily. Cof family. Requires Mg(2+) as cofactor.

The catalysed reaction is 4-amino-2-methyl-5-(diphosphooxymethyl)pyrimidine + H2O = 4-amino-2-methyl-5-(phosphooxymethyl)pyrimidine + phosphate + H(+). In terms of biological role, catalyzes the hydrolysis of 4-amino-2-methyl-5-hydroxymethylpyrimidine pyrophosphate (HMP-PP) to 4-amino-2-methyl-5-hydroxymethylpyrimidine phosphate (HMP-P). The polypeptide is HMP-PP phosphatase (Escherichia coli (strain UTI89 / UPEC)).